The primary structure comprises 365 residues: Protein-glutamate methylesterase/protein-glutamine glutaminase 2 (365 aa).

The 118-residue stretch at 6–123 folds into the Response regulatory domain; it reads RVLIIDDSAS…ADSLSDDAMR (118 aa). Aspartate 57 is subject to 4-aspartylphosphate. Residues 173–359 enclose the CheB-type methylesterase domain; the sequence is AKTTEMVVCV…PLDQIAREVL (187 aa). Catalysis depends on residues serine 185, histidine 211, and aspartate 307.

This sequence belongs to the CheB family. Post-translationally, phosphorylated by CheA. Phosphorylation of the N-terminal regulatory domain activates the methylesterase activity.

It is found in the cytoplasm. The enzyme catalyses [protein]-L-glutamate 5-O-methyl ester + H2O = L-glutamyl-[protein] + methanol + H(+). It carries out the reaction L-glutaminyl-[protein] + H2O = L-glutamyl-[protein] + NH4(+). In terms of biological role, involved in chemotaxis. Part of a chemotaxis signal transduction system that modulates chemotaxis in response to various stimuli. Catalyzes the demethylation of specific methylglutamate residues introduced into the chemoreceptors (methyl-accepting chemotaxis proteins or MCP) by CheR. Also mediates the irreversible deamidation of specific glutamine residues to glutamic acid. In Rhizobium johnstonii (strain DSM 114642 / LMG 32736 / 3841) (Rhizobium leguminosarum bv. viciae), this protein is Protein-glutamate methylesterase/protein-glutamine glutaminase 2.